We begin with the raw amino-acid sequence, 251 residues long: Pyruvate formate-lyase-activating enzyme (251 aa).

The Radical SAM core domain maps to 15–244 (VDGPGLRYIL…KAAYRYVNFK (230 aa)). [4Fe-4S] cluster contacts are provided by Cys29, Cys33, and Cys36. Residues 35–37 (YCH), Gly79, 134–136 (DIK), and His207 each bind S-adenosyl-L-methionine.

It belongs to the organic radical-activating enzymes family. The cofactor is [4Fe-4S] cluster.

The protein resides in the cytoplasm. It catalyses the reaction glycyl-[formate C-acetyltransferase] + reduced [flavodoxin] + S-adenosyl-L-methionine = glycin-2-yl radical-[formate C-acetyltransferase] + semiquinone [flavodoxin] + 5'-deoxyadenosine + L-methionine + H(+). Functionally, activation of pyruvate formate-lyase under anaerobic conditions by generation of an organic free radical, using S-adenosylmethionine and reduced flavodoxin as cosubstrates to produce 5'-deoxy-adenosine. In Staphylococcus aureus (strain N315), this protein is Pyruvate formate-lyase-activating enzyme (pflA).